A 415-amino-acid polypeptide reads, in one-letter code: Histidine--tRNA ligase (415 aa).

The protein belongs to the class-II aminoacyl-tRNA synthetase family. As to quaternary structure, homodimer.

Its subcellular location is the cytoplasm. It catalyses the reaction tRNA(His) + L-histidine + ATP = L-histidyl-tRNA(His) + AMP + diphosphate + H(+). The polypeptide is Histidine--tRNA ligase (Clostridium botulinum (strain 657 / Type Ba4)).